A 207-amino-acid polypeptide reads, in one-letter code: Elongation factor 1-beta (207 aa).

Ala2 carries the N-acetylalanine modification. The segment at 70–96 (FPGIPTSASKEEDDDVDLFGSDEEDEE) is disordered. Residues 80–96 (EEDDDVDLFGSDEEDEE) are compositionally biased toward acidic residues. At Ser90 the chain carries Phosphoserine; by CK2.

The protein belongs to the EF-1-beta/EF-1-delta family. EF-1 is composed of 4 subunits: alpha, beta, delta, and gamma. Post-translationally, phosphorylation affects the GDP/GTP exchange rate.

EF-1-beta and EF-1-delta stimulate the exchange of GDP bound to EF-1-alpha to GTP. This Artemia salina (Brine shrimp) protein is Elongation factor 1-beta.